The following is a 229-amino-acid chain: Demethylmenaquinone methyltransferase (229 aa).

Residues Thr-57, Asp-77, and 101-102 (DV) each bind S-adenosyl-L-methionine.

Belongs to the class I-like SAM-binding methyltransferase superfamily. MenG/UbiE family.

The enzyme catalyses a 2-demethylmenaquinol + S-adenosyl-L-methionine = a menaquinol + S-adenosyl-L-homocysteine + H(+). It functions in the pathway quinol/quinone metabolism; menaquinone biosynthesis; menaquinol from 1,4-dihydroxy-2-naphthoate: step 2/2. Methyltransferase required for the conversion of demethylmenaquinol (DMKH2) to menaquinol (MKH2). The sequence is that of Demethylmenaquinone methyltransferase from Chlamydia trachomatis serovar L2 (strain ATCC VR-902B / DSM 19102 / 434/Bu).